A 312-amino-acid chain; its full sequence is MEIMFYHPTFDTAWWLNALAKAIPGANIREWKPGDNEPADYALVWHPPVEMLEGRKLKAVFALGAGVDSILSKLKAHPEMLDASIPLFRLEDTGMGLQMQEYAVSQVLHWFRRFDDYQALKNQSTWQPLPEYDRDEFTVGIMGAGVLGAKVAEALQAWGFPLRCWSRSRKSWPGVESFAGAEELGAFLNQTRVLINLLPNTAETVGIINSGLLNQLRDGAYLLNLARGVHVNEDDLLAALNSEKLKGAMLDVFSREPLPKESPLWQHPRVAMTPHIAAVTRPAEAVDYISRTITHLERGESVTGQVDRVRGY.

Arg-227 is a catalytic residue. His-275 acts as the Proton donor in catalysis.

The protein belongs to the D-isomer specific 2-hydroxyacid dehydrogenase family. GhrA subfamily.

Its subcellular location is the cytoplasm. The enzyme catalyses glycolate + NADP(+) = glyoxylate + NADPH + H(+). The catalysed reaction is (R)-glycerate + NAD(+) = 3-hydroxypyruvate + NADH + H(+). It carries out the reaction (R)-glycerate + NADP(+) = 3-hydroxypyruvate + NADPH + H(+). In terms of biological role, catalyzes the NADPH-dependent reduction of glyoxylate and hydroxypyruvate into glycolate and glycerate, respectively. The protein is Glyoxylate/hydroxypyruvate reductase A of Citrobacter koseri (strain ATCC BAA-895 / CDC 4225-83 / SGSC4696).